A 280-amino-acid chain; its full sequence is UPF0276 protein CC_3255 (280 aa).

The protein belongs to the UPF0276 family.

The sequence is that of UPF0276 protein CC_3255 from Caulobacter vibrioides (strain ATCC 19089 / CIP 103742 / CB 15) (Caulobacter crescentus).